The chain runs to 375 residues: Erythronate-4-phosphate dehydrogenase (375 aa).

Residues serine 45 and threonine 66 each contribute to the substrate site. Residues aspartate 146 and threonine 175 each contribute to the NAD(+) site. Residue arginine 208 is part of the active site. Aspartate 232 contacts NAD(+). Residue glutamate 237 is part of the active site. The active-site Proton donor is histidine 254. Glycine 257 is an NAD(+) binding site. Tyrosine 258 is a substrate binding site.

It belongs to the D-isomer specific 2-hydroxyacid dehydrogenase family. PdxB subfamily. Homodimer.

It is found in the cytoplasm. The catalysed reaction is 4-phospho-D-erythronate + NAD(+) = (R)-3-hydroxy-2-oxo-4-phosphooxybutanoate + NADH + H(+). The protein operates within cofactor biosynthesis; pyridoxine 5'-phosphate biosynthesis; pyridoxine 5'-phosphate from D-erythrose 4-phosphate: step 2/5. Catalyzes the oxidation of erythronate-4-phosphate to 3-hydroxy-2-oxo-4-phosphonooxybutanoate. The chain is Erythronate-4-phosphate dehydrogenase from Edwardsiella ictaluri (strain 93-146).